We begin with the raw amino-acid sequence, 1697 residues long: Phosphatidylinositol 3-kinase 3 (1697 aa).

Disordered stretches follow at residues 57–91 (RSINNNNNNNNNNNNNNNNNNNNNNNNNNNNTQPC), 169–229 (INNN…DSSI), 244–279 (KTTETKETSTGTSPLEKSPSKGFIISPKKPEEENEI), 310–376 (KKNN…NSVG), 398–428 (SWTSSKPTSSSIGFASSPQNNGKPLNISGSS), and 440–504 (DLLK…NNDE). Low complexity-rich tracts occupy residues 60 to 87 (NNNNNNNNNNNNNNNNNNNNNNNNNNNN), 170 to 196 (NNNNNNNNNNNNNNNNNNNNNNNNNNN), and 212 to 222 (NNNSNNNNNIN). Low complexity-rich tracts occupy residues 312 to 374 (NNNN…TTNS) and 398 to 408 (SWTSSKPTSSS). Polar residues-rich tracts occupy residues 409–428 (IGFASSPQNNGKPLNISGSS) and 444–456 (SPSSSPPTQSDIF). Over residues 457–503 (NENNNNNNNNNNNNNNNNNNNNNNNNNNNNNNNNEELINNNNNNNND) the composition is skewed to low complexity. One can recognise a PI3K-RBD domain in the interval 737-823 (PEFFVIRVHL…KGEIDLTMVE (87 aa)). Residues 888–1036 (VTENLQVRLL…QAIIIAFEFK (149 aa)) enclose the C2 PI3K-type domain. Residues 1060–1238 (GNELPVVTME…RVLSSGFLRY (179 aa)) form the PIK helical domain. Positions 1304-1581 (IPEKCKSMDS…LIHESIGTLT (278 aa)) constitute a PI3K/PI4K catalytic domain. The interval 1310 to 1316 (SMDSAKV) is G-loop. A catalytic loop region spans residues 1447 to 1455 (GIGDRHNDN). The interval 1466 to 1492 (HIDFGHFLGNFKTFAGFQREKAPFVLT) is activation loop. Over residues 1609 to 1625 (ASSLNLNKNKPSSQSKL) the composition is skewed to low complexity. Residues 1609–1697 (ASSLNLNKNK…DTEKENSIDK (89 aa)) are disordered. 5 repeat units span residues 1622–1626 (QSKLD), 1627–1631 (LSRSD), 1632–1636 (LSRSD), 1642–1646 (SSRLD), and 1647–1651 (LSRSD). Positions 1622-1651 (QSKLDLSRSDLSRSDSSRSDSSRLDLSRSD) are 5 X 5 AA approximate repeats. 2 stretches are compositionally biased toward basic and acidic residues: residues 1626-1681 (DLSR…DKDN) and 1688-1697 (DTEKENSIDK). The interval 1659–1672 (KEKEKEKEKEKEKE) is 7 X 2 AA tandem repeats of K-E.

The protein belongs to the PI3/PI4-kinase family.

It carries out the reaction a 1,2-diacyl-sn-glycero-3-phospho-(1D-myo-inositol) + ATP = a 1,2-diacyl-sn-glycero-3-phospho-(1D-myo-inositol-3-phosphate) + ADP + H(+). The chain is Phosphatidylinositol 3-kinase 3 (pikC) from Dictyostelium discoideum (Social amoeba).